Here is a 407-residue protein sequence, read N- to C-terminus: Substance-P receptor (407 aa).

Residues 1 to 31 (MDNVLQVDSDLFPNISTNTSEPNQFVQPAWQ) are Extracellular-facing. Residues Asn14 and Asn18 are each glycosylated (N-linked (GlcNAc...) asparagine). A helical membrane pass occupies residues 32–54 (IVLWAAAYTVIVVTSVVGNVVVM). The Cytoplasmic portion of the chain corresponds to 55-64 (WIILAHKRMR). The chain crosses the membrane as a helical span at residues 65-86 (TVTNYFLVNLAFAEASMAAFNT). At 87-106 (VVNFTYAVHNEWYYGLFYCK) the chain is on the extracellular side. Cys105 and Cys180 form a disulfide bridge. Residues 107 to 128 (FHNFFPIAAVFASIYSMTAVAF) form a helical membrane-spanning segment. At 129 to 148 (DRYMAIIHPLQPRLSATATK) the chain is on the cytoplasmic side. A helical transmembrane segment spans residues 149 to 169 (VVICVIWVLALLLAFPQGYYS). Residues 170 to 194 (TTETMPNRVVCMIEWPEHPNKIYEK) lie on the Extracellular side of the membrane. The helical transmembrane segment at 195-219 (VYHICVTVLIYFLPLLVIGYAYTVV) threads the bilayer. The Cytoplasmic segment spans residues 220–248 (GITLWASEIPGDSSDRYHEQVSAKRKVVK). The chain crosses the membrane as a helical span at residues 249-270 (MMIVVVCTFAICWLPFHIFFLL). The Extracellular portion of the chain corresponds to 271–283 (PYINPDLYLEKFI). A helical membrane pass occupies residues 284–308 (QQVYLAIMWLAMSSTMYNPIIYCCL). Residues 309–407 (NDRFRLGFKH…SFSFYSNMLS (99 aa)) lie on the Cytoplasmic side of the membrane. Cys322 carries the S-palmitoyl cysteine lipid modification. The segment at 365-394 (HEEELEDGPKTTPSSLDLTSNGSSRSDSKT) is disordered. Residues 375–394 (TTPSSLDLTSNGSSRSDSKT) are compositionally biased toward polar residues.

It belongs to the G-protein coupled receptor 1 family. As to quaternary structure, interacts with ARRB1.

Its subcellular location is the cell membrane. In terms of biological role, this is a receptor for the tachykinin neuropeptide substance P. It is probably associated with G proteins that activate a phosphatidylinositol-calcium second messenger system. This chain is Substance-P receptor (TACR1), found in Canis lupus familiaris (Dog).